A 125-amino-acid chain; its full sequence is Glycine cleavage system H protein (125 aa).

The region spanning 22–104 (SYVIGITDFA…YDTGWILKLE (83 aa)) is the Lipoyl-binding domain. An N6-lipoyllysine modification is found at lysine 63.

The protein belongs to the GcvH family. As to quaternary structure, the glycine cleavage system is composed of four proteins: P, T, L and H. (R)-lipoate serves as cofactor.

In terms of biological role, the glycine cleavage system catalyzes the degradation of glycine. The H protein shuttles the methylamine group of glycine from the P protein to the T protein. Its function is as follows. Is also involved in protein lipoylation via its role as an octanoyl/lipoyl carrier protein intermediate. This is Glycine cleavage system H protein from Listeria monocytogenes serotype 4a (strain HCC23).